The chain runs to 384 residues: Glucans biosynthesis protein C (384 aa).

A run of 10 helical transmembrane segments spans residues 17–37 (AWLMLLGIPFHISLIYSTHSW), 54–74 (FIHAFRMQVFFVISGYFSYML), 91–111 (VGIPMLTAIPLLTLPQFILLQ), 140–160 (LWFLLVLVILTTVSIGIFTWF), 173–193 (AISLVRLSLIFFLLGMAYAAI), 212–232 (FIVMQTLFYVPFFILGALAFI), 240–260 (FTTPSRGCTLGAAVAFIAYLL), 274–294 (TESVITMVMGLWMVNVVFSLG), 311–331 (ASLFIYLVHHPLTLFFGAYIT), and 338–358 (LIGFLCGLIFVMGIALILYEI).

The protein belongs to the acyltransferase 3 family. OpgC subfamily.

It localises to the cell membrane. It participates in glycan metabolism; osmoregulated periplasmic glucan (OPG) biosynthesis. Functionally, necessary for the succinyl substitution of periplasmic glucans. Could catalyze the transfer of succinyl residues from the cytoplasmic side of the membrane to the nascent glucan backbones on the periplasmic side of the membrane. This Salmonella gallinarum (strain 287/91 / NCTC 13346) protein is Glucans biosynthesis protein C.